The chain runs to 225 residues: PKHD-type hydroxylase YbiX (225 aa).

The Fe2OG dioxygenase domain occupies 78–177 (TLSTPLFNRY…RVASFMWIQS (100 aa)). Residues histidine 96, aspartate 98, and histidine 158 each contribute to the Fe cation site. Arginine 168 is a 2-oxoglutarate binding site.

Requires Fe(2+) as cofactor. L-ascorbate is required as a cofactor.

This is PKHD-type hydroxylase YbiX from Shigella boydii serotype 18 (strain CDC 3083-94 / BS512).